Consider the following 537-residue polypeptide: Zinc metalloproteinase nas-23 (537 aa).

Residues 1 to 16 (MRFLILVLAGSIGIYG) form the signal peptide. Residues 17–111 (VNLPKIPKLS…EQLDHSRTKR (95 aa)) constitute a propeptide that is removed on maturation. Asn77 carries an N-linked (GlcNAc...) asparagine glycan. The region spanning 116-311 (NAMYPKTIWL…AKINRHYNCE (196 aa)) is the Peptidase M12A domain. 6 disulfide bridges follow: Cys156–Cys310, Cys178–Cys199, Cys314–Cys334, Cys336–Cys345, Cys356–Cys385, and Cys412–Cys433. His207 provides a ligand contact to Zn(2+). Glu208 is an active-site residue. Residues His211 and His217 each contribute to the Zn(2+) site. The EGF-like domain occupies 306-346 (RHYNCEKNCKNKITCLNGGYQHPKNCKICVCPPGYGGSDCK). A CUB domain is found at 356-471 (CTGVLVAGET…VQLRYSTVDG (116 aa)). Residue Asn481 is glycosylated (N-linked (GlcNAc...) asparagine).

Requires Zn(2+) as cofactor. In terms of tissue distribution, expressed in the hypodermis, rectum and to a lesser extent in pharyngeal muscles and intestine.

The protein localises to the secreted. In terms of biological role, metalloprotease. In Caenorhabditis elegans, this protein is Zinc metalloproteinase nas-23 (nas-23).